Reading from the N-terminus, the 349-residue chain is MNIKSALNRVVNQLDLTTDEMRDVMREIMTGQCTEAQIGAFLMGMRMKSETIDEIVGAVSVMRELASSVELKTLDGVVDIVGTGGDGANIFNVSTASAFVIAAAGCKVAKHGNRAVSGKSGSADLLEAAGVYLNLTPVQVARCIDSVGIGFMFAQSHHTAMKHTAGPRRELGLRTLFNMLGPLTNPAGVRHQIVGVFNQALCRPLAEVLLRLGSKHVLVVHSQDGLDEFSLAAPTFVAELKNGEVTEYWVQPEDLGIKSQSLYGLAVESPAVSLELIRDALGRRKTENGQKAAEMIVLNAGAALYAADHATSLKEGVALAHDALHTGLAREKLEELGAFTAVFKQENEA.

5-phospho-alpha-D-ribose 1-diphosphate contacts are provided by residues G82, G85–D86, N92–T95, K110–G118, and S122. G82 is an anthranilate binding site. S94 contributes to the Mg(2+) binding site. N113 is an anthranilate binding site. R168 is a binding site for anthranilate. Residues D227 and E228 each contribute to the Mg(2+) site.

Belongs to the anthranilate phosphoribosyltransferase family. Homodimer. Mg(2+) is required as a cofactor.

It carries out the reaction N-(5-phospho-beta-D-ribosyl)anthranilate + diphosphate = 5-phospho-alpha-D-ribose 1-diphosphate + anthranilate. It functions in the pathway amino-acid biosynthesis; L-tryptophan biosynthesis; L-tryptophan from chorismate: step 2/5. Catalyzes the transfer of the phosphoribosyl group of 5-phosphorylribose-1-pyrophosphate (PRPP) to anthranilate to yield N-(5'-phosphoribosyl)-anthranilate (PRA). In Pseudomonas savastanoi pv. phaseolicola (strain 1448A / Race 6) (Pseudomonas syringae pv. phaseolicola (strain 1448A / Race 6)), this protein is Anthranilate phosphoribosyltransferase.